The sequence spans 226 residues: Insulin-like growth factor-binding protein 6 (226 aa).

Positions 1-25 are cleaved as a signal peptide; the sequence is MTWDGLPTQPLLMLLMLLFAAGSES. The IGFBP N-terminal domain maps to 26 to 99; that stretch reads ALAGCPGCGP…LIGQGRCQRA (74 aa). Cystine bridges form between Cys30-Cys33, Cys49-Cys55, Cys63-Cys76, and Cys70-Cys96. Positions 92 to 148 are disordered; it reads GQGRCQRARGPSEETTKESKPHGGASRPRDRDRQKNPRTSAAPIRPSPVQDGEMGPC. Basic and acidic residues predominate over residues 101-126; the sequence is GPSEETTKESKPHGGASRPRDRDRQK. The Thyroglobulin type-1 domain occupies 145–220; sequence MGPCRRHLDS…SPDGQGSSQC (76 aa). 3 cysteine pairs are disulfide-bonded: Cys148–Cys176, Cys187–Cys198, and Cys200–Cys220. The disordered stretch occupies residues 205–226; it reads GQPLPVSPDGQGSSQCSARSSG. The segment covering 214–226 has biased composition (polar residues); that stretch reads GQGSSQCSARSSG.

As to quaternary structure, interacts (via C-terminal domain) with PHB2. O-glycosylated.

The protein resides in the secreted. Its function is as follows. IGF-binding proteins prolong the half-life of the IGFs and have been shown to either inhibit or stimulate the growth promoting effects of the IGFs on cell culture. They alter the interaction of IGFs with their cell surface receptors. Activates the MAPK signaling pathway and induces cell migration. The chain is Insulin-like growth factor-binding protein 6 (Igfbp6) from Rattus norvegicus (Rat).